The sequence spans 217 residues: Small ribosomal subunit protein uS3 (217 aa).

The region spanning 40–110 (IRDLINNSFN…EVYINIHEVR (71 aa)) is the KH type-2 domain.

It belongs to the universal ribosomal protein uS3 family. Part of the 30S ribosomal subunit. Forms a tight complex with proteins S10 and S14.

Binds the lower part of the 30S subunit head. Binds mRNA in the 70S ribosome, positioning it for translation. The polypeptide is Small ribosomal subunit protein uS3 (Rickettsia canadensis (strain McKiel)).